Here is a 1582-residue protein sequence, read N- to C-terminus: Nik-related protein kinase (1582 aa).

One can recognise a Protein kinase domain in the interval 25 to 313 (FSLDKTIGLG…SANMLQHPFV (289 aa)). ATP contacts are provided by residues 31–39 (IGLGTYGRI) and Lys54. The active-site Proton acceptor is Asp177. Composition is skewed to low complexity over residues 492–507 (QVQS…QTQT), 527–538 (PEQQRQGQAPEQ), and 551–572 (EQNQ…AQAE). The interval 492 to 579 (QVQSQVSKKQ…QAETEAEEPE (88 aa)) is disordered. Residues 725–759 (QRRQRRWEDIFNQHEEELRQVDKDKEDESSDNDEV) are a coiled coil. Disordered stretches follow at residues 783–859 (EVQE…PPYS) and 926–1156 (ASAD…GSGM). Composition is skewed to polar residues over residues 803–814 (FSSSVPQRSLLE), 825–834 (RSSQNRQNWL), and 850–859 (RRSQSSPPYS). Phosphoserine occurs at positions 852 and 855. Residues 926 to 944 (ASADTDGDDDDESNDTFED) show a composition bias toward acidic residues. 2 stretches are compositionally biased toward basic and acidic residues: residues 965-978 (VCKD…KFVD) and 999-1016 (GSCK…EEAY). A phosphoserine mark is found at Ser1027, Ser1031, and Ser1034. Basic and acidic residues-rich tracts occupy residues 1043 to 1061 (QEEH…EGDG) and 1125 to 1135 (PDHESDNKDIS). Positions 1136-1154 (ESSTQSDFSANHSSPSKGS) are enriched in polar residues. The 344-residue stretch at 1209-1552 (TSEICCGSLW…RFLCTRGDKL (344 aa)) folds into the CNH domain.

The protein belongs to the protein kinase superfamily. STE Ser/Thr protein kinase family. STE20 subfamily.

It carries out the reaction L-seryl-[protein] + ATP = O-phospho-L-seryl-[protein] + ADP + H(+). The catalysed reaction is L-threonyl-[protein] + ATP = O-phospho-L-threonyl-[protein] + ADP + H(+). May phosphorylate cofilin-1 and induce actin polymerization through this process, during the late stages of embryogenesis. Involved in the TNF-alpha-induced signaling pathway. This is Nik-related protein kinase (NRK) from Homo sapiens (Human).